The primary structure comprises 176 residues: Glutamyl-tRNA(Gln) amidotransferase subunit F, mitochondrial (176 aa).

Belongs to the GatF family. As to quaternary structure, subunit of the heterotrimeric GatFAB amidotransferase (AdT) complex, composed of A, B and F subunits.

It localises to the mitochondrion inner membrane. It carries out the reaction L-glutamyl-tRNA(Gln) + L-glutamine + ATP + H2O = L-glutaminyl-tRNA(Gln) + L-glutamate + ADP + phosphate + H(+). Allows the formation of correctly charged Gln-tRNA(Gln) through the transamidation of misacylated Glu-tRNA(Gln) in the mitochondria. The reaction takes place in the presence of glutamine and ATP through an activated gamma-phospho-Glu-tRNA(Gln). Required for proper protein synthesis within the mitochondrion. The protein is Glutamyl-tRNA(Gln) amidotransferase subunit F, mitochondrial of Yarrowia lipolytica (strain CLIB 122 / E 150) (Yeast).